A 278-amino-acid chain; its full sequence is Chitosanase (278 aa).

Residues 1 to 40 (MHSQHRTARIALAVVLTAIPASLATAGVGYASTQASTAVK) form the signal peptide. E62 functions as the Proton donor in the catalytic mechanism. The active-site Nucleophile is the D80.

The protein belongs to the glycosyl hydrolase 46 family.

It is found in the secreted. The enzyme catalyses Endohydrolysis of beta-(1-&gt;4)-linkages between D-glucosamine residues in a partly acetylated chitosan.. Aids in the defense against invading fungal pathogens by degrading their cell wall chitosan. The chain is Chitosanase (csn) from Streptomyces sp. (strain N174).